A 155-amino-acid chain; its full sequence is Pathogenesis-related protein A (155 aa).

This sequence belongs to the BetVI family.

The polypeptide is Pathogenesis-related protein A (PCPR1-1) (Petroselinum crispum (Parsley)).